Here is an 832-residue protein sequence, read N- to C-terminus: SID1 transmembrane family member 2 (832 aa).

Residues 1-15 (MIAWRLPLCVLLVAA) form the signal peptide. At 16 to 293 (VESHLGALGP…VSQAVTSEAY (278 aa)) the chain is on the extracellular side. N-linked (GlcNAc...) asparagine glycans are attached at residues asparagine 27, asparagine 54, asparagine 60, asparagine 123, asparagine 141, and asparagine 165. Residues 294-314 (VGGMLFCLGIFLSFYLLTVLL) form a helical membrane-spanning segment. The Cytoplasmic portion of the chain corresponds to 315–447 (ACWENWRQRK…DKRVLRKKYQ (133 aa)). Phosphoserine is present on residues serine 401, serine 403, and serine 404. Residues 448 to 468 (IYFWNIATIAVFYALPVVQLV) form a helical membrane-spanning segment. At 469-499 (ITYQTVVNVTGNQDICYYNFLCAHPLGNLSA) the chain is on the extracellular side. Asparagine 476 and asparagine 496 each carry an N-linked (GlcNAc...) asparagine glycan. The helical transmembrane segment at 500 to 520 (FNNILSNLGYILLGLLFLLII) threads the bilayer. The Cytoplasmic portion of the chain corresponds to 521–546 (LQREINHNRALLRNDLYALECGIPKH). The helical transmembrane segment at 547-567 (FGLFYAMGTALMMEGLLSACY) threads the bilayer. Residues 568-605 (HVCPNYTNFQFDTSFMYMIAGLCMLKLYQKRHPDINAS) are Extracellular-facing. Residues asparagine 572 and asparagine 603 are each glycosylated (N-linked (GlcNAc...) asparagine). Residues 606-626 (AYSAYACLAIVIFFSVLGVVF) traverse the membrane as a helical segment. The Cytoplasmic segment spans residues 627 to 631 (GKGNT). A helical transmembrane segment spans residues 632–652 (AFWIVFSVIHIISTLLLSTQL). Topologically, residues 653-688 (YYMGRWKLDSGIFRRILHVLYTDCIRQCSGPLYTDR) are extracellular. Residues 689–709 (MVLLVMGNIINWSLAAYGLIM) form a helical membrane-spanning segment. At 710 to 715 (RPNDFA) the chain is on the cytoplasmic side. A helical transmembrane segment spans residues 716 to 736 (SYLLAIGICNLLLYFAFYIIM). Residues 737 to 746 (KLRSGERIKL) are Extracellular-facing. Residues 747–767 (IPLLCIVCTSVVWGFALFFFF) form a helical membrane-spanning segment. Residues 768–796 (QGLSTWQKTPAESREHNRDCILLDFFDDH) lie on the Cytoplasmic side of the membrane. Residues 797–817 (DIWHFLSSIAMFGSFLVLLTL) form a helical membrane-spanning segment. Residues 818-832 (DDDLDTVQRDKIYVF) lie on the Extracellular side of the membrane.

It belongs to the SID1 family. Interacts with adapter protein complex 1 (AP-1) and AP-2, but not AP-3 and AP-4. Interacts with LAMP2. Post-translationally, glycosylated. In terms of tissue distribution, highly expressed in the liver, brain, kidney and intestine (at protein level).

Its subcellular location is the lysosome membrane. It localises to the cell membrane. Its function is as follows. Mediates the translocation of RNA and DNA across the lysosomal membrane during RNA and DNA autophagy (RDA), a process in which RNA or DNA is directly imported into lysosomes in an ATP-dependent manner, and degraded. Involved in the uptake of single-stranded oligonucleotides by living cells, a process called gymnosis. In vitro, mediates the uptake of linear DNA more efficiently than that of circular DNA, but exhibits similar uptake efficacy toward RNA and DNA. Binds long double-stranded RNA (dsRNA) (500 - 700 base pairs), but not dsRNA shorter than 100 bp. This is SID1 transmembrane family member 2 (Sidt2) from Rattus norvegicus (Rat).